Consider the following 252-residue polypeptide: tRNA (guanine-N(7)-)-methyltransferase (252 aa).

4 residues coordinate S-adenosyl-L-methionine: Glu-51, Asp-76, Asn-103, and Asp-125. Asp-125 is a catalytic residue. Substrate is bound by residues Lys-129, Asp-159, and 199-202; that span reads TYYE.

The protein belongs to the class I-like SAM-binding methyltransferase superfamily. TrmB family.

It carries out the reaction guanosine(46) in tRNA + S-adenosyl-L-methionine = N(7)-methylguanosine(46) in tRNA + S-adenosyl-L-homocysteine. It functions in the pathway tRNA modification; N(7)-methylguanine-tRNA biosynthesis. Catalyzes the formation of N(7)-methylguanine at position 46 (m7G46) in tRNA. This Bacteroides thetaiotaomicron (strain ATCC 29148 / DSM 2079 / JCM 5827 / CCUG 10774 / NCTC 10582 / VPI-5482 / E50) protein is tRNA (guanine-N(7)-)-methyltransferase.